The following is a 354-amino-acid chain: S-adenosylmethionine:tRNA ribosyltransferase-isomerase (354 aa).

Belongs to the QueA family. Monomer.

The protein localises to the cytoplasm. It catalyses the reaction 7-aminomethyl-7-carbaguanosine(34) in tRNA + S-adenosyl-L-methionine = epoxyqueuosine(34) in tRNA + adenine + L-methionine + 2 H(+). It functions in the pathway tRNA modification; tRNA-queuosine biosynthesis. Functionally, transfers and isomerizes the ribose moiety from AdoMet to the 7-aminomethyl group of 7-deazaguanine (preQ1-tRNA) to give epoxyqueuosine (oQ-tRNA). The polypeptide is S-adenosylmethionine:tRNA ribosyltransferase-isomerase (Salmonella heidelberg (strain SL476)).